The primary structure comprises 240 residues: 2-C-methyl-D-erythritol 4-phosphate cytidylyltransferase (240 aa).

The protein belongs to the IspD/TarI cytidylyltransferase family. IspD subfamily.

It carries out the reaction 2-C-methyl-D-erythritol 4-phosphate + CTP + H(+) = 4-CDP-2-C-methyl-D-erythritol + diphosphate. It participates in isoprenoid biosynthesis; isopentenyl diphosphate biosynthesis via DXP pathway; isopentenyl diphosphate from 1-deoxy-D-xylulose 5-phosphate: step 2/6. Functionally, catalyzes the formation of 4-diphosphocytidyl-2-C-methyl-D-erythritol from CTP and 2-C-methyl-D-erythritol 4-phosphate (MEP). The sequence is that of 2-C-methyl-D-erythritol 4-phosphate cytidylyltransferase from Chlorobium luteolum (strain DSM 273 / BCRC 81028 / 2530) (Pelodictyon luteolum).